Here is a 211-residue protein sequence, read N- to C-terminus: Uracil phosphoribosyltransferase (211 aa).

5-phospho-alpha-D-ribose 1-diphosphate-binding positions include R78, R103, and 130 to 138; that span reads DPMLATGGT. Residues I196 and 201-203 contribute to the uracil site; that span reads GDA. D202 lines the 5-phospho-alpha-D-ribose 1-diphosphate pocket.

The protein belongs to the UPRTase family. Requires Mg(2+) as cofactor.

The catalysed reaction is UMP + diphosphate = 5-phospho-alpha-D-ribose 1-diphosphate + uracil. Its pathway is pyrimidine metabolism; UMP biosynthesis via salvage pathway; UMP from uracil: step 1/1. With respect to regulation, allosterically activated by GTP. Catalyzes the conversion of uracil and 5-phospho-alpha-D-ribose 1-diphosphate (PRPP) to UMP and diphosphate. The sequence is that of Uracil phosphoribosyltransferase from Beutenbergia cavernae (strain ATCC BAA-8 / DSM 12333 / CCUG 43141 / JCM 11478 / NBRC 16432 / NCIMB 13614 / HKI 0122).